The primary structure comprises 491 residues: NADPH:adrenodoxin oxidoreductase, mitochondrial (491 aa).

A mitochondrion-targeting transit peptide spans 1–32; sequence MASRCWRWWGWSAWPRTRLPPAGSTPSFCHHF. FAD-binding residues include Ala49, Glu69, Leu77, and Val113. Residues 184-187, 228-229, and Glu240 contribute to the NADP(+) site; these read QGNV and RR. Residues Ser310 and Ser317 each carry the phosphoserine modification. FAD contacts are provided by residues Trp398 and 405–407; that span reads GVI. Gly405 lines the NADP(+) pocket.

The protein belongs to the ferredoxin--NADP reductase type 1 family. Monomer. Interacts directly with FDX1. It depends on FAD as a cofactor.

The protein localises to the mitochondrion. Its subcellular location is the mitochondrion inner membrane. The enzyme catalyses 2 reduced [adrenodoxin] + NADP(+) + H(+) = 2 oxidized [adrenodoxin] + NADPH. It carries out the reaction 2 reduced [2Fe-2S]-[ferredoxin] + NADP(+) + H(+) = 2 oxidized [2Fe-2S]-[ferredoxin] + NADPH. It participates in steroid metabolism; cholesterol metabolism. Serves as the first electron transfer protein in all the mitochondrial P450 systems including cholesterol side chain cleavage in all steroidogenic tissues, steroid 11-beta hydroxylation in the adrenal cortex, 25-OH-vitamin D3-24 hydroxylation in the kidney, and sterol C-27 hydroxylation in the liver. Also acts as a ferredoxin--NADP(+) reductase essential for coenzyme Q biosynthesis: together with FDX2, transfers the electrons required for the hydroxylation reaction performed by COQ6. This chain is NADPH:adrenodoxin oxidoreductase, mitochondrial, found in Homo sapiens (Human).